Consider the following 67-residue polypeptide: Conotoxin TsMMSK-B022 (67 aa).

An N-terminal signal peptide occupies residues 1-22 (MMSKLGVLLTICLLLFPLTAVS). Residues 23-50 (LDGDQPADLPELRAQDFAPERSPWFDPV) constitute a propeptide that is removed on maturation. Cystine bridges form between Cys53–Cys65, Cys54–Cys61, and Cys58–Cys64. Pro63 bears the 4-hydroxyproline mark.

The protein belongs to the conotoxin M superfamily. As to expression, expressed by the venom duct.

It is found in the secreted. This chain is Conotoxin TsMMSK-B022, found in Conus tessulatus (Tessellate cone).